A 458-amino-acid chain; its full sequence is UDP-N-acetylmuramate--L-alanine ligase (458 aa).

Residue 118–124 participates in ATP binding; sequence GTHGKTT.

The protein belongs to the MurCDEF family.

Its subcellular location is the cytoplasm. The catalysed reaction is UDP-N-acetyl-alpha-D-muramate + L-alanine + ATP = UDP-N-acetyl-alpha-D-muramoyl-L-alanine + ADP + phosphate + H(+). The protein operates within cell wall biogenesis; peptidoglycan biosynthesis. In terms of biological role, cell wall formation. This is UDP-N-acetylmuramate--L-alanine ligase from Clostridium novyi (strain NT).